Consider the following 298-residue polypeptide: Junctional adhesion molecule B (298 aa).

A signal peptide spans 1-28 (MARSPQGLLMLLLLHYLIVALDYHKANG). The Extracellular portion of the chain corresponds to 29–236 (FSASKDHRQE…GKRMQVDVLN (208 aa)). The 97-residue stretch at 32 to 128 (SKDHRQEVTV…GQNLQEDKVM (97 aa)) folds into the Ig-like V-type domain. Disulfide bonds link Cys51-Cys110 and Cys156-Cys214. The N-linked (GlcNAc...) asparagine glycan is linked to Asn99. In terms of domain architecture, Ig-like C2-type spans 135-238 (PAVPACEVPT…RMQVDVLNIS (104 aa)). The chain crosses the membrane as a helical span at residues 237 to 257 (ISGIIATVVVVAFVISVCGLG). Over 258-298 (TCYAQRKGYFSKETSFQKGSPASKVTTMSENDFKHTKSFII) the chain is Cytoplasmic.

Belongs to the immunoglobulin superfamily. In terms of processing, the expression in Sertoli cells is regulated by TGFB3 through ubiquitin-mediated proteasomal degradation. As to expression, expressed by bone marrow stromal cells (at protein level). Expressed in skin (at protein level). Expressed in testis by Sertoli cells (at protein level). Expressed by dorsal root ganglion and spinal cord neurons.

The protein localises to the cell membrane. It is found in the cell junction. The protein resides in the tight junction. Its function is as follows. Junctional adhesion protein that mediates heterotypic cell-cell interactions with its cognate receptor JAM3 to regulate different cellular processes. Plays a role in homing and mobilization of hematopoietic stem and progenitor cells within the bone marrow. At the surface of bone marrow stromal cells, it contributes to the retention of the hematopoietic stem and progenitor cells expressing JAM3. Plays a central role in leukocytes extravasation by facilitating not only transmigration but also tethering and rolling of leukocytes along the endothelium. Tethering and rolling of leukocytes are dependent on the binding by JAM2 of the integrin alpha-4/beta-1. Plays a role in spermatogenesis where JAM2 and JAM3, which are respectively expressed by Sertoli and germ cells, mediate an interaction between both cell types and play an essential role in the anchorage of germ cells onto Sertoli cells and the assembly of cell polarity complexes during spermatid differentiation. Also functions as an inhibitory somatodendritic cue that prevents the myelination of non-axonal parts of neurons. During myogenesis, it is involved in myocyte fusion. May also play a role in angiogenesis. This is Junctional adhesion molecule B from Mus musculus (Mouse).